The chain runs to 435 residues: F-box/FBD/LRR-repeat protein At1g51370 (435 aa).

In terms of domain architecture, F-box spans 18-64 (EDRISQLPEPLISEILFHLSTKDSVRTSALSTKWRYLWQSVPGLDLD). LRR repeat units lie at residues 123 to 148 (VHCF…RLRW), 170 to 195 (VSYP…ILFS), 234 to 259 (AKMY…DFVN), 262 to 287 (GRYQ…VISS), and 314 to 340 (RFYI…ILEM). One can recognise an FBD domain in the interval 354–406 (EPNVMVSTVPWCLVSSLKFVELKRSIPRYEGEMELVRYVLTNSTVLKKLRLNV).

The chain is F-box/FBD/LRR-repeat protein At1g51370 from Arabidopsis thaliana (Mouse-ear cress).